A 156-amino-acid chain; its full sequence is Small ribosomal subunit protein uS7 (156 aa).

This sequence belongs to the universal ribosomal protein uS7 family. In terms of assembly, part of the 30S ribosomal subunit. Contacts proteins S9 and S11.

One of the primary rRNA binding proteins, it binds directly to 16S rRNA where it nucleates assembly of the head domain of the 30S subunit. Is located at the subunit interface close to the decoding center, probably blocks exit of the E-site tRNA. This chain is Small ribosomal subunit protein uS7, found in Prochlorococcus marinus (strain MIT 9301).